The following is a 211-amino-acid chain: Glutathione S-transferase (211 aa).

The region spanning 3-87 is the GST N-terminal domain; that stretch reads DNIVLYYFDA…YLSKKYNICG (85 aa). Glutathione-binding positions include 58–59, 71–72, Asp-105, Lys-117, and Thr-121; these read QV and QS. A GST C-terminal domain is found at 89-211; the sequence is SELNEFYADM…YITNRKESVY (123 aa).

Belongs to the GST superfamily. In terms of assembly, homodimer. In the absence of ligands two homodimers may interact to form a tetramer.

The enzyme catalyses RX + glutathione = an S-substituted glutathione + a halide anion + H(+). Its activity is regulated as follows. Inhibited by chloroquine, cibacron blue, ferriprotoporphyrin IX (hemin) and S-hexylglutathione. Conjugation of reduced glutathione to a wide number of exogenous and endogenous hydrophobic electrophiles. May also function as a storage protein or ligandin for parasitotoxic ferriprotoporphyrin IX (hemin). This Plasmodium falciparum (isolate 3D7) protein is Glutathione S-transferase.